The chain runs to 375 residues: tRNA-specific 2-thiouridylase MnmA (375 aa).

ATP is bound by residues 12–19 and Met-38; that span reads GMSGGVDS. Positions 98 to 100 are interaction with target base in tRNA; the sequence is NPD. The active-site Nucleophile is the Cys-103. Cys-103 and Cys-200 are oxidised to a cystine. Position 127 (Gly-127) interacts with ATP. The segment at 150 to 152 is interaction with tRNA; that stretch reads KDQ. Cys-200 serves as the catalytic Cysteine persulfide intermediate. The segment at 312 to 313 is interaction with tRNA; sequence RY.

It belongs to the MnmA/TRMU family.

The protein localises to the cytoplasm. The catalysed reaction is S-sulfanyl-L-cysteinyl-[protein] + uridine(34) in tRNA + AH2 + ATP = 2-thiouridine(34) in tRNA + L-cysteinyl-[protein] + A + AMP + diphosphate + H(+). Its function is as follows. Catalyzes the 2-thiolation of uridine at the wobble position (U34) of tRNA, leading to the formation of s(2)U34. The chain is tRNA-specific 2-thiouridylase MnmA from Lactobacillus johnsonii (strain CNCM I-12250 / La1 / NCC 533).